The following is a 237-amino-acid chain: Nodulation protein NolA (237 aa).

Positions arginine 10 to glycine 79 constitute an HTH merR-type domain. The segment at residues isoleucine 13–histidine 32 is a DNA-binding region (H-T-H motif).

Involved in genotype-specific nodulation of soybeans. This is Nodulation protein NolA (nolA) from Bradyrhizobium diazoefficiens (strain JCM 10833 / BCRC 13528 / IAM 13628 / NBRC 14792 / USDA 110).